The primary structure comprises 393 residues: Putative cytochrome P450 143 (393 aa).

Cys-342 provides a ligand contact to heme.

Belongs to the cytochrome P450 family. The cofactor is heme.

This Mycobacterium bovis (strain ATCC BAA-935 / AF2122/97) protein is Putative cytochrome P450 143 (cyp143).